An 88-amino-acid polypeptide reads, in one-letter code: Sigma-conotoxin GVIIIA (88 aa).

The first 20 residues, 1–20 (MMSKMGAMFVLLLLFTLASS), serve as a signal peptide directing secretion. The propeptide occupies 21 to 46 (LQEGDVQARKTRLKSDFYRALARDDR). P55 is modified (4-hydroxyproline). At W80 the chain carries 6'-bromotryptophan. S87 bears the Serine amide mark.

This sequence belongs to the conotoxin S superfamily. Contains 5 disulfide bonds. As to expression, expressed by the venom duct.

It is found in the secreted. In terms of biological role, sigma-conotoxins bind and inhibit serotonin-gated ion channels. This peptide selectively and reversibly inhibits 5-hydroxytryptamine 3 receptor (HTR3A) through competitive antagonism (IC(50)=53-86.8 nM). This Conus geographus (Geography cone) protein is Sigma-conotoxin GVIIIA.